The primary structure comprises 194 residues: Imidazoleglycerol-phosphate dehydratase (194 aa).

Belongs to the imidazoleglycerol-phosphate dehydratase family.

It is found in the cytoplasm. The catalysed reaction is D-erythro-1-(imidazol-4-yl)glycerol 3-phosphate = 3-(imidazol-4-yl)-2-oxopropyl phosphate + H2O. Its pathway is amino-acid biosynthesis; L-histidine biosynthesis; L-histidine from 5-phospho-alpha-D-ribose 1-diphosphate: step 6/9. The sequence is that of Imidazoleglycerol-phosphate dehydratase from Listeria monocytogenes serotype 4b (strain F2365).